A 360-amino-acid polypeptide reads, in one-letter code: SPRY domain-containing SOCS box protein 3 (360 aa).

A disordered region spans residues 21-54; the sequence is DQDGRSPALHAEEEAWGYDSDGQHSNSDSDTDLL. Positions 84–274 constitute a B30.2/SPRY domain; it reads SLHPFRQIKS…MKVIRSCCCR (191 aa). One can recognise an SOCS box domain in the interval 264-315; the sequence is SMKVIRSCCCRTSLQYLCCARLRQLLPGSVDSLEVLPLPPGLKQVLSNKLGW. A disordered region spans residues 322 to 350; sequence NRSSQHKGDGSATTSCGSYSDSSCTPGHD. Residues 332–346 show a composition bias toward polar residues; the sequence is SATTSCGSYSDSSCT.

It belongs to the SPSB family. Substrate-recognition component of the ECS(SPSB3) complex, composed of spsb3, cul5, elob, elob and rnf7/rbx2.

Its subcellular location is the nucleus. It functions in the pathway protein modification; protein ubiquitination. In terms of biological role, substrate-recognition component of a cullin-5-RING E3 ubiquitin-protein ligase complex (ECS complex, also named CRL5 complex), which mediates the ubiquitination and subsequent proteasomal degradation of target proteins. This chain is SPRY domain-containing SOCS box protein 3 (spsb3), found in Xenopus laevis (African clawed frog).